We begin with the raw amino-acid sequence, 580 residues long: Proline--tRNA ligase (580 aa).

This sequence belongs to the class-II aminoacyl-tRNA synthetase family. ProS type 1 subfamily. In terms of assembly, homodimer.

It is found in the cytoplasm. The enzyme catalyses tRNA(Pro) + L-proline + ATP = L-prolyl-tRNA(Pro) + AMP + diphosphate. In terms of biological role, catalyzes the attachment of proline to tRNA(Pro) in a two-step reaction: proline is first activated by ATP to form Pro-AMP and then transferred to the acceptor end of tRNA(Pro). As ProRS can inadvertently accommodate and process non-cognate amino acids such as alanine and cysteine, to avoid such errors it has two additional distinct editing activities against alanine. One activity is designated as 'pretransfer' editing and involves the tRNA(Pro)-independent hydrolysis of activated Ala-AMP. The other activity is designated 'posttransfer' editing and involves deacylation of mischarged Ala-tRNA(Pro). The misacylated Cys-tRNA(Pro) is not edited by ProRS. The protein is Proline--tRNA ligase of Maridesulfovibrio salexigens (strain ATCC 14822 / DSM 2638 / NCIMB 8403 / VKM B-1763) (Desulfovibrio salexigens).